The sequence spans 112 residues: uncharacterized protein (112 aa).

2 positions are modified to phosphoserine: Ser-51 and Ser-53. A helical transmembrane segment spans residues 90–110 (FIFTLSMFLIAFILLIAFVSF).

It is found in the golgi apparatus membrane. The protein localises to the endoplasmic reticulum membrane. This is an uncharacterized protein from Schizosaccharomyces pombe (strain 972 / ATCC 24843) (Fission yeast).